Here is a 90-residue protein sequence, read N- to C-terminus: Probable dynein light chain 2, cytoplasmic (90 aa).

It belongs to the dynein light chain family.

It localises to the cytoplasm. It is found in the cytoskeleton. Functionally, acts as one of several non-catalytic accessory components of a dynein complex. The chain is Probable dynein light chain 2, cytoplasmic (dlc-2) from Caenorhabditis elegans.